The sequence spans 539 residues: Squalene monooxygenase SE1 (539 aa).

Transmembrane regions (helical) follow at residues 22 to 42 (LLIDQYFLGWIFAFLFGFLLL) and 71 to 91 (IAGSTDVIIVGAGVAGSALAY). Residues 84 to 85 (VA), 104 to 105 (ER), Arg112, Arg183, Val199, Asp361, and Met374 each bind FAD. The chain crosses the membrane as a helical span at residues 472–492 (LFLHFFAVAIYGVGRLLIPFP).

This sequence belongs to the squalene monooxygenase family. FAD is required as a cofactor. In terms of tissue distribution, mostly expressed in flower buds and leaves, and, to a lower extent, at high levels thought, in roots and petioles. In petioles, preferentially observed in vascular bundle tissue (phloem cells and parenchymatous cells near xylem) and resin ducts.

It localises to the microsome membrane. It is found in the endoplasmic reticulum membrane. The catalysed reaction is squalene + reduced [NADPH--hemoprotein reductase] + O2 = (S)-2,3-epoxysqualene + oxidized [NADPH--hemoprotein reductase] + H2O + H(+). The protein operates within terpene metabolism; lanosterol biosynthesis; lanosterol from farnesyl diphosphate: step 2/3. Functionally, component of the triterpene saponins (e.g. ginsenosides or panaxosides) and phytosterols biosynthetic pathways. Catalyzes the first oxygenation step in sterol biosynthesis and is suggested to be one of the rate-limiting enzymes in this pathway. The sequence is that of Squalene monooxygenase SE1 from Panax ginseng (Korean ginseng).